The sequence spans 84 residues: Acyl carrier protein (84 aa).

The 76-residue stretch at 4 to 79 folds into the Carrier domain; sequence NEIFEKVQDI…EVVDFIKSKL (76 aa). Ser39 bears the O-(pantetheine 4'-phosphoryl)serine mark.

The protein belongs to the acyl carrier protein (ACP) family. In terms of processing, 4'-phosphopantetheine is transferred from CoA to a specific serine of apo-ACP by AcpS. This modification is essential for activity because fatty acids are bound in thioester linkage to the sulfhydryl of the prosthetic group.

It is found in the plastid. It localises to the chloroplast. The protein operates within lipid metabolism; fatty acid biosynthesis. Carrier of the growing fatty acid chain in fatty acid biosynthesis. This is Acyl carrier protein from Porphyra purpurea (Red seaweed).